Here is a 49-residue protein sequence, read N- to C-terminus: Large ribosomal subunit protein bL33 (49 aa).

Belongs to the bacterial ribosomal protein bL33 family.

In Syntrophotalea carbinolica (strain DSM 2380 / NBRC 103641 / GraBd1) (Pelobacter carbinolicus), this protein is Large ribosomal subunit protein bL33.